Reading from the N-terminus, the 323-residue chain is Ribonuclease Z (323 aa).

7 residues coordinate Zn(2+): histidine 62, histidine 64, aspartate 66, histidine 67, histidine 140, aspartate 211, and histidine 270. The active-site Proton acceptor is aspartate 66.

Belongs to the RNase Z family. As to quaternary structure, homodimer. The cofactor is Zn(2+).

It carries out the reaction Endonucleolytic cleavage of RNA, removing extra 3' nucleotides from tRNA precursor, generating 3' termini of tRNAs. A 3'-hydroxy group is left at the tRNA terminus and a 5'-phosphoryl group is left at the trailer molecule.. Its function is as follows. Zinc phosphodiesterase, which displays some tRNA 3'-processing endonuclease activity. Probably involved in tRNA maturation, by removing a 3'-trailer from precursor tRNA. This chain is Ribonuclease Z, found in Marinobacter nauticus (strain ATCC 700491 / DSM 11845 / VT8) (Marinobacter aquaeolei).